Here is a 124-residue protein sequence, read N- to C-terminus: Small ribosomal subunit protein uS12 (124 aa).

Aspartate 89 is subject to 3-methylthioaspartic acid.

The protein belongs to the universal ribosomal protein uS12 family. As to quaternary structure, part of the 30S ribosomal subunit. Contacts proteins S8 and S17. May interact with IF1 in the 30S initiation complex.

With S4 and S5 plays an important role in translational accuracy. In terms of biological role, interacts with and stabilizes bases of the 16S rRNA that are involved in tRNA selection in the A site and with the mRNA backbone. Located at the interface of the 30S and 50S subunits, it traverses the body of the 30S subunit contacting proteins on the other side and probably holding the rRNA structure together. The combined cluster of proteins S8, S12 and S17 appears to hold together the shoulder and platform of the 30S subunit. This Mannheimia succiniciproducens (strain KCTC 0769BP / MBEL55E) protein is Small ribosomal subunit protein uS12.